The following is a 414-amino-acid chain: 2,3-diketo-5-methylthiopentyl-1-phosphate enolase (414 aa).

K99 (proton acceptor) is an active-site residue. Substrate-binding positions include K148, 174–177 (KDDE), H265, G338, and 360–361 (GG). 3 residues coordinate Mg(2+): K174, D176, and E177. K174 is modified (N6-carboxylysine).

The protein belongs to the RuBisCO large chain family. Type IV subfamily. Homodimer. Mg(2+) serves as cofactor.

The enzyme catalyses 5-methylsulfanyl-2,3-dioxopentyl phosphate = 2-hydroxy-5-methylsulfanyl-3-oxopent-1-enyl phosphate. The protein operates within amino-acid biosynthesis; L-methionine biosynthesis via salvage pathway; L-methionine from S-methyl-5-thio-alpha-D-ribose 1-phosphate: step 3/6. Functionally, catalyzes the enolization of 2,3-diketo-5-methylthiopentyl-1-phosphate (DK-MTP-1-P) into 2-hydroxy-3-keto-5-methylthiopentenyl-1-phosphate (HK-MTPenyl-1-P). This Bacillus mycoides (strain KBAB4) (Bacillus weihenstephanensis) protein is 2,3-diketo-5-methylthiopentyl-1-phosphate enolase.